We begin with the raw amino-acid sequence, 184 residues long: Photosystem I assembly protein Ycf4 (184 aa).

A run of 2 helical transmembrane segments spans residues 22-42 (FCWA…GTSS) and 57-77 (IIFF…LFIS).

It belongs to the Ycf4 family.

It localises to the plastid. It is found in the chloroplast thylakoid membrane. Seems to be required for the assembly of the photosystem I complex. The polypeptide is Photosystem I assembly protein Ycf4 (Olimarabidopsis pumila (Dwarf rocket)).